A 295-amino-acid polypeptide reads, in one-letter code: Ubiquinol-cytochrome c reductase complex assembly factor 1 (295 aa).

Belongs to the CBP3 family. In terms of assembly, interacts with UQCC2. Interacts with UQCC3. Forms a complex, named COMB/coordinator of mitochondrial CYTB biogenesis, composed of UQCC1, UQCC2, UQCC4, UQCC5 and UQCC6; stabilizes nascent cytochrome b/MT-CYB and promotes its membrane insertion. Forms a complex, named COMA, composed of UQCC1, UQCC2 and UQCC4; activates MT-CYB translation. Forms a complex, named COMC, composed of UQCC1, UQCC2; UQCC3 and UQCC4; mediates MT-CYB hemylation and association with the first nuclear-encoded CIII subunit UQCRQ. In the brain it is restricted to the olfactory bulb, the hippocampus, the piriform cortex and the Purkinje cells.

The protein resides in the mitochondrion inner membrane. Its subcellular location is the cytoplasmic vesicle. Functionally, required for the assembly of the ubiquinol-cytochrome c reductase complex (mitochondrial respiratory chain complex III or cytochrome b-c1 complex). Involved in cytochrome b translation and/or stability. The sequence is that of Ubiquinol-cytochrome c reductase complex assembly factor 1 (Uqcc1) from Mus musculus (Mouse).